We begin with the raw amino-acid sequence, 277 residues long: Carbonyl reductase [NADPH] 1 (277 aa).

NADP(+) is bound by residues 10 to 34 (VTGS…GEVV), 63 to 64 (DI), and asparagine 90. Serine 30 bears the Phosphoserine mark. Glutathione is bound by residues 95–97 (FKV) and glutamine 106. Serine 140 contributes to the substrate binding site. 193 to 194 (AY) contributes to the glutathione binding site. The active-site Proton acceptor is the tyrosine 194. NADP(+) is bound by residues 194–198 (YGVTK) and 231–233 (VRT).

This sequence belongs to the short-chain dehydrogenases/reductases (SDR) family. In terms of assembly, monomer.

It localises to the cytoplasm. The enzyme catalyses a secondary alcohol + NADP(+) = a ketone + NADPH + H(+). The catalysed reaction is prostaglandin F2alpha + NADP(+) = prostaglandin E2 + NADPH + H(+). It carries out the reaction prostaglandin E1 + NADP(+) = 15-oxoprostaglandin E1 + NADPH + H(+). It catalyses the reaction prostaglandin D2 + NADP(+) = 15-oxoprostaglandin D2 + NADPH + H(+). The enzyme catalyses menadione + NADPH + H(+) = menadiol + NADP(+). The catalysed reaction is prostaglandin E2 + NADP(+) = 15-oxoprostaglandin E2 + NADPH + H(+). It carries out the reaction prostaglandin F2alpha + NADP(+) = 15-oxoprostaglandin F2alpha + NADPH + H(+). It catalyses the reaction daunorubicin + NADPH + H(+) = 13-dihydrodaunorubicin + NADP(+). The enzyme catalyses S-nitrosoglutathione + NADPH + H(+) = S-(hydroxysulfenamide)glutathione + NADP(+). The catalysed reaction is a primary alcohol + NADP(+) = an aldehyde + NADPH + H(+). It carries out the reaction cortisol + NADPH + H(+) = 20beta-dihydrocortisol + NADP(+). It catalyses the reaction corticosterone + NADPH + H(+) = 20beta-dihydrocorticosterone + NADP(+). Its function is as follows. NADPH-dependent reductase with broad substrate specificity. Catalyzes the reduction of a wide variety of carbonyl compounds including quinones, prostaglandins, menadione, plus various xenobiotics. Catalyzes the reduction of the antitumor anthracyclines doxorubicin and daunorubicin to the cardiotoxic compounds doxorubicinol and daunorubicinol. Can convert prostaglandin E to prostaglandin F2-alpha. Can bind glutathione, which explains its higher affinity for glutathione-conjugated substrates. Catalyzes the reduction of S-nitrosoglutathione. In addition, participates in the glucocorticoid metabolism by catalyzing the NADPH-dependent cortisol/corticosterone into 20beta-dihydrocortisol (20b-DHF) or 20beta-corticosterone (20b-DHB), which are weak agonists of NR3C1 and NR3C2 in adipose tissue. The polypeptide is Carbonyl reductase [NADPH] 1 (Macaca fascicularis (Crab-eating macaque)).